A 373-amino-acid polypeptide reads, in one-letter code: MTKGLILLAAGGTGGHLFPAEALAHELRARGYSVHLVTDSRAERYAGKFPADAIHVVPSATIGSKNPVAIAKALLTLWRGYRAARSLIAGLKPLVVIGFGGYPTIPPLLAARALGVATVIHEQNAVMGRANRFLAPRVKAIAGGFLPAGGAYADKTVVTGNPVRPAVLAASETDYQPSGDGDPFELVVFGGSQGAQHFSNAVPSAICILDDVLRARLRITQQARPEDADRVKALYEKLKVPASVSPFFGDMAERIATSQMVISRSGASTVSELGVIGRPAVLVPYPYALDHDQAANAAAISGQGGAVVVPQSDLTPEKLSALLKDWMTSPAKLAQMAASARSAGQPEAAGLLADLVQTIAEGKNLKTLKDVKA.

Residues 13-15 (TGG), Asn-124, Arg-164, Ser-192, and Gln-293 contribute to the UDP-N-acetyl-alpha-D-glucosamine site.

This sequence belongs to the glycosyltransferase 28 family. MurG subfamily.

The protein resides in the cell inner membrane. It carries out the reaction di-trans,octa-cis-undecaprenyl diphospho-N-acetyl-alpha-D-muramoyl-L-alanyl-D-glutamyl-meso-2,6-diaminopimeloyl-D-alanyl-D-alanine + UDP-N-acetyl-alpha-D-glucosamine = di-trans,octa-cis-undecaprenyl diphospho-[N-acetyl-alpha-D-glucosaminyl-(1-&gt;4)]-N-acetyl-alpha-D-muramoyl-L-alanyl-D-glutamyl-meso-2,6-diaminopimeloyl-D-alanyl-D-alanine + UDP + H(+). It functions in the pathway cell wall biogenesis; peptidoglycan biosynthesis. Functionally, cell wall formation. Catalyzes the transfer of a GlcNAc subunit on undecaprenyl-pyrophosphoryl-MurNAc-pentapeptide (lipid intermediate I) to form undecaprenyl-pyrophosphoryl-MurNAc-(pentapeptide)GlcNAc (lipid intermediate II). The sequence is that of UDP-N-acetylglucosamine--N-acetylmuramyl-(pentapeptide) pyrophosphoryl-undecaprenol N-acetylglucosamine transferase from Allorhizobium ampelinum (strain ATCC BAA-846 / DSM 112012 / S4) (Agrobacterium vitis (strain S4)).